The sequence spans 128 residues: Tachykinin-4 (128 aa).

An N-terminal signal peptide occupies residues 1-16; the sequence is MLPLLALLLLIGPSVC. Residues 17-54 constitute a propeptide that is removed on maturation; it reads TTAGDREELAFGAEAESWVTVNLKGIPVPSIELKLQEL. Met66 bears the Methionine amide mark. The propeptide occupies 69 to 128; sequence RVGGYQLGRIVQDLLGTRGLSIEGTCRQAASQQRARPGAVTRESLQSREEDEAPLTTSNV. Positions 96-128 are disordered; it reads QAASQQRARPGAVTRESLQSREEDEAPLTTSNV.

Belongs to the tachykinin family. Expressed in hematopoietic cells with highest levels in pre- and pro-B cells but not in later developmental stages. Also detected in uterus, skeletal muscle, brain, spleen, stomach, skin and lactating mammary gland and in cells of myeloid lineage including dendritic and microglial cells and macrophages. In uterus, highest expression is observed in non-pregnant diestrus mice and in day 5 pregnant mice. Compared with mice in diestrus, decreases 2.6-fold in uteri from non-pregnant mice in estrus and 10.2-fold in day 17 pregnant mice. Detected at sites of chronic inflammation such as granulomas.

It localises to the secreted. In terms of biological role, tachykinins are active peptides which excite neurons, evoke behavioral responses, are potent vasodilators and secretagogues, and contract (directly or indirectly) many smooth muscles. Hemokinin induces plasma extravasation, mast cell degranulation, muscle contraction, salivary secretion and scratching behavior. Increases sperm motility. Induces potent analgesic effects and may play a role in pain modulation. Promotes survival of bone marrow B lineage cells and of cultured LPS-stimulated pre-B cells and may act as an autocrine factor required for B-cell survival and proliferation. Lowers systemic arterial pressure following intravenous injection. Induces interferon-gamma production and may play a role in the inflammatory response. Shows potent affinity and specificity for the NK-1 receptor. This is Tachykinin-4 from Mus musculus (Mouse).